The following is a 210-amino-acid chain: Large ribosomal subunit protein bL25 (210 aa).

The protein belongs to the bacterial ribosomal protein bL25 family. CTC subfamily. Part of the 50S ribosomal subunit; part of the 5S rRNA/L5/L18/L25 subcomplex. Contacts the 5S rRNA. Binds to the 5S rRNA independently of L5 and L18.

Functionally, this is one of the proteins that binds to the 5S RNA in the ribosome where it forms part of the central protuberance. The chain is Large ribosomal subunit protein bL25 from Frankia casuarinae (strain DSM 45818 / CECT 9043 / HFP020203 / CcI3).